The sequence spans 151 residues: Snaclec 3 (151 aa).

An N-terminal signal peptide occupies residues 1-23 (MGRLVFVSFSLLVVFLSLSGTAA). 3 disulfides stabilise this stretch: Cys-25–Cys-36, Cys-53–Cys-149, and Cys-125–Cys-141. One can recognise a C-type lectin domain in the interval 32–150 (YEGHCYKPFN…CGEINPFVCK (119 aa)).

This sequence belongs to the snaclec family. In terms of assembly, heterodimer; disulfide-linked. Expressed by the venom gland.

It is found in the secreted. In terms of biological role, interferes with one step of hemostasis (modulation of platelet aggregation, or coagulation cascade, for example). This chain is Snaclec 3, found in Sistrurus catenatus edwardsii (Desert massasauga).